The sequence spans 146 residues: Large ribosomal subunit protein uL15 (146 aa).

The tract at residues 1-61 is disordered; sequence MELNSLKPAA…GGQMPMHRRL (61 aa). Over residues 30 to 39 the composition is skewed to basic residues; sequence TATKGHKGQK.

The protein belongs to the universal ribosomal protein uL15 family. As to quaternary structure, part of the 50S ribosomal subunit.

In terms of biological role, binds to the 23S rRNA. This Geotalea uraniireducens (strain Rf4) (Geobacter uraniireducens) protein is Large ribosomal subunit protein uL15.